A 923-amino-acid chain; its full sequence is Protein translocase subunit SecA (923 aa).

Residues Q86, 104–108, and D512 each bind ATP; that span reads GEGKT. The Zn(2+) site is built by C906, C908, C917, and H918.

Belongs to the SecA family. Monomer and homodimer. Part of the essential Sec protein translocation apparatus which comprises SecA, SecYEG and auxiliary proteins SecDF-YajC and YidC. The cofactor is Zn(2+).

It localises to the cell inner membrane. The protein resides in the cytoplasm. It carries out the reaction ATP + H2O + cellular proteinSide 1 = ADP + phosphate + cellular proteinSide 2.. Functionally, part of the Sec protein translocase complex. Interacts with the SecYEG preprotein conducting channel. Has a central role in coupling the hydrolysis of ATP to the transfer of proteins into and across the cell membrane, serving both as a receptor for the preprotein-SecB complex and as an ATP-driven molecular motor driving the stepwise translocation of polypeptide chains across the membrane. This Caulobacter vibrioides (strain ATCC 19089 / CIP 103742 / CB 15) (Caulobacter crescentus) protein is Protein translocase subunit SecA.